A 360-amino-acid polypeptide reads, in one-letter code: Phospho-N-acetylmuramoyl-pentapeptide-transferase (360 aa).

10 helical membrane passes run 27-47 (IVSLLTALFISLWMGPHLIAW), 72-92 (PTMGGLMILFSITISVLMWAY), 94-114 (SNPYVWCVLFILIGYGIVGFI), 132-152 (WKYFWQSIIALAAAFTMYSIG), 168-188 (IMPQLGLLYVLLAYFVIVGTS), 199-219 (GLAIMPTVFVAAGFALVAWAT), 236-256 (AGELVIVCTAIVGAGLGFLWF), 263-283 (VFMGDVGSLALGGALGTIAVL), 288-308 (FLLVIMGGVFVVETLSVILQV), and 338-358 (VIVRFWIISLMLVLIGLATLK).

This sequence belongs to the glycosyltransferase 4 family. MraY subfamily. The cofactor is Mg(2+).

It is found in the cell inner membrane. The catalysed reaction is UDP-N-acetyl-alpha-D-muramoyl-L-alanyl-gamma-D-glutamyl-meso-2,6-diaminopimeloyl-D-alanyl-D-alanine + di-trans,octa-cis-undecaprenyl phosphate = di-trans,octa-cis-undecaprenyl diphospho-N-acetyl-alpha-D-muramoyl-L-alanyl-D-glutamyl-meso-2,6-diaminopimeloyl-D-alanyl-D-alanine + UMP. It functions in the pathway cell wall biogenesis; peptidoglycan biosynthesis. Functionally, catalyzes the initial step of the lipid cycle reactions in the biosynthesis of the cell wall peptidoglycan: transfers peptidoglycan precursor phospho-MurNAc-pentapeptide from UDP-MurNAc-pentapeptide onto the lipid carrier undecaprenyl phosphate, yielding undecaprenyl-pyrophosphoryl-MurNAc-pentapeptide, known as lipid I. This Yersinia pseudotuberculosis serotype O:1b (strain IP 31758) protein is Phospho-N-acetylmuramoyl-pentapeptide-transferase.